We begin with the raw amino-acid sequence, 342 residues long: Renalase (342 aa).

An N-terminal signal peptide occupies residues 1–17; that stretch reads MSRVLVVGAGLTGSLCA. Residues T12, R42, and 61 to 62 contribute to the FAD site; that span reads QY.

Belongs to the renalase family. FAD serves as cofactor. Expressed predominantly in kidney and testis with lower levels in liver, heart and embryo and weak expression in brain and skeletal muscle.

Its subcellular location is the secreted. It catalyses the reaction 1,2-dihydro-beta-NAD + O2 + H(+) = H2O2 + NAD(+). It carries out the reaction 1,2-dihydro-beta-NADP + O2 + H(+) = H2O2 + NADP(+). The catalysed reaction is 1,6-dihydro-beta-NADP + O2 + H(+) = H2O2 + NADP(+). The enzyme catalyses 1,6-dihydro-beta-NAD + O2 + H(+) = H2O2 + NAD(+). In terms of biological role, catalyzes the oxidation of the less abundant 1,2-dihydro-beta-NAD(P) and 1,6-dihydro-beta-NAD(P) to form beta-NAD(P)(+). The enzyme hormone is secreted by the kidney, and circulates in blood and modulates cardiac function and systemic blood pressure. Lowers blood pressure in vivo by decreasing cardiac contractility and heart rate and preventing a compensatory increase in peripheral vascular tone, suggesting a causal link to the increased plasma catecholamine and heightened cardiovascular risk. High concentrations of catecholamines activate plasma renalase and promotes its secretion and synthesis. In Mus musculus (Mouse), this protein is Renalase.